A 629-amino-acid chain; its full sequence is Serine/threonine-protein kinase ICK (629 aa).

The region spanning 4-284 (YTTIKQLGDG…ASQALRYPYF (281 aa)) is the Protein kinase domain. ATP contacts are provided by residues 10–18 (LGDGTYGSV) and Lys33. Asp125 serves as the catalytic Proton acceptor. Phosphothreonine; by CDK7 is present on Thr157. At Tyr159 the chain carries Phosphotyrosine. Ser161 bears the Phosphoserine mark. Disordered stretches follow at residues 292 to 376 (IISK…SLHN), 455 to 483 (SESV…SSAK), and 581 to 629 (SSLK…PSRR). The segment covering 296–306 (DSGKPQREVQD) has biased composition (basic and acidic residues). Residues 309–321 (GPPPYIKPAPPAQ) show a composition bias toward pro residues. 2 stretches are compositionally biased toward low complexity: residues 322–344 (APAK…PQHS) and 457–470 (SVGT…QASS).

This sequence belongs to the protein kinase superfamily. CMGC Ser/Thr protein kinase family. CDC2/CDKX subfamily. It depends on Mg(2+) as a cofactor. Post-translationally, autophosphorylated on serine and threonine residues. Phosphorylation at Thr-157 by CDK7/Cak1p increases kinase activity. As to expression, highly expressed in colon and lung, lower levels present in heart, esophagus, stomach, small intestine and ovary. Localizes to the crypt region of large and small intestine.

It localises to the cytoplasm. It is found in the cytosol. Its subcellular location is the cell projection. The protein localises to the cilium. The protein resides in the nucleus. It localises to the cytoskeleton. It is found in the cilium basal body. The catalysed reaction is L-seryl-[protein] + ATP = O-phospho-L-seryl-[protein] + ADP + H(+). It carries out the reaction L-threonyl-[protein] + ATP = O-phospho-L-threonyl-[protein] + ADP + H(+). Its function is as follows. Has an essential role in ciliogenesis, particularly in neuronal and retinal progenitor cells. Phosphorylates KIF3A. Involved in the control of ciliary length. Regulates the ciliary localization of SHH pathway components as well as the localization of IFT components at ciliary tips. May play a role in cardiac development. Regulates intraflagellar transport (IFT) speed and negatively regulates cilium length in a cAMP and mTORC1 signaling -dependent manner and this regulation requires its kinase activity. This Mus musculus (Mouse) protein is Serine/threonine-protein kinase ICK (Cilk1).